Here is a 246-residue protein sequence, read N- to C-terminus: Triosephosphate isomerase (246 aa).

Asn-9 to Lys-11 serves as a coordination point for substrate. The Electrophile role is filled by His-99. Glu-168 acts as the Proton acceptor in catalysis. Residues Gly-174, Ser-207, and Gly-228–Gly-229 contribute to the substrate site.

This sequence belongs to the triosephosphate isomerase family. In terms of assembly, homodimer.

Its subcellular location is the cytoplasm. It carries out the reaction D-glyceraldehyde 3-phosphate = dihydroxyacetone phosphate. It functions in the pathway carbohydrate biosynthesis; gluconeogenesis. The protein operates within carbohydrate degradation; glycolysis; D-glyceraldehyde 3-phosphate from glycerone phosphate: step 1/1. Its function is as follows. Involved in the gluconeogenesis. Catalyzes stereospecifically the conversion of dihydroxyacetone phosphate (DHAP) to D-glyceraldehyde-3-phosphate (G3P). The polypeptide is Triosephosphate isomerase (Prochlorococcus marinus (strain NATL2A)).